An 89-amino-acid chain; its full sequence is Small ribosomal subunit protein uS15 (89 aa).

This sequence belongs to the universal ribosomal protein uS15 family. Part of the 30S ribosomal subunit. Forms a bridge to the 50S subunit in the 70S ribosome, contacting the 23S rRNA.

Functionally, one of the primary rRNA binding proteins, it binds directly to 16S rRNA where it helps nucleate assembly of the platform of the 30S subunit by binding and bridging several RNA helices of the 16S rRNA. In terms of biological role, forms an intersubunit bridge (bridge B4) with the 23S rRNA of the 50S subunit in the ribosome. The chain is Small ribosomal subunit protein uS15 from Marinobacter nauticus (strain ATCC 700491 / DSM 11845 / VT8) (Marinobacter aquaeolei).